The following is a 390-amino-acid chain: GTPase Obg (390 aa).

An Obg domain is found at 1-159; sequence MKFVDEASIL…RELLLELMLL (159 aa). The segment at 127–147 is disordered; sequence NTRFKSSVNRTPRQKTNGTPG. A compositionally biased stretch (polar residues) spans 129–145; sequence RFKSSVNRTPRQKTNGT. In terms of domain architecture, OBG-type G spans 160 to 333; it reads ADVGMLGMPN…LCWDVMTFII (174 aa). Residues 166–173, 191–195, 213–216, 283–286, and 314–316 each bind GTP; these read GMPNAGKS, FTTLV, DIPG, NKID, and SAA. Serine 173 and threonine 193 together coordinate Mg(2+).

The protein belongs to the TRAFAC class OBG-HflX-like GTPase superfamily. OBG GTPase family. As to quaternary structure, monomer. It depends on Mg(2+) as a cofactor.

Its subcellular location is the cytoplasm. Functionally, an essential GTPase which binds GTP, GDP and possibly (p)ppGpp with moderate affinity, with high nucleotide exchange rates and a fairly low GTP hydrolysis rate. Plays a role in control of the cell cycle, stress response, ribosome biogenesis and in those bacteria that undergo differentiation, in morphogenesis control. The sequence is that of GTPase Obg from Escherichia coli O157:H7.